The following is a 361-amino-acid chain: Ribosomal RNA large subunit methyltransferase M (361 aa).

S-adenosyl-L-methionine contacts are provided by residues Ser187, 220-223, Asp239, Asp259, and Asp276; that span reads CPGG. Lys305 (proton acceptor) is an active-site residue.

It belongs to the class I-like SAM-binding methyltransferase superfamily. RNA methyltransferase RlmE family. RlmM subfamily. In terms of assembly, monomer.

It localises to the cytoplasm. The catalysed reaction is cytidine(2498) in 23S rRNA + S-adenosyl-L-methionine = 2'-O-methylcytidine(2498) in 23S rRNA + S-adenosyl-L-homocysteine + H(+). Functionally, catalyzes the 2'-O-methylation at nucleotide C2498 in 23S rRNA. The polypeptide is Ribosomal RNA large subunit methyltransferase M (Shewanella baltica (strain OS185)).